Consider the following 562-residue polypeptide: Phosphomethylpyrimidine synthase (562 aa).

Residues N179, M208, Y237, H273, 293–295 (SRG), 334–337 (DGLR), and E373 contribute to the substrate site. H377 contributes to the Zn(2+) binding site. Y400 is a binding site for substrate. H441 serves as a coordination point for Zn(2+). C521, C524, and C529 together coordinate [4Fe-4S] cluster.

The protein belongs to the ThiC family. Requires [4Fe-4S] cluster as cofactor.

The enzyme catalyses 5-amino-1-(5-phospho-beta-D-ribosyl)imidazole + S-adenosyl-L-methionine = 4-amino-2-methyl-5-(phosphooxymethyl)pyrimidine + CO + 5'-deoxyadenosine + formate + L-methionine + 3 H(+). It participates in cofactor biosynthesis; thiamine diphosphate biosynthesis. Functionally, catalyzes the synthesis of the hydroxymethylpyrimidine phosphate (HMP-P) moiety of thiamine from aminoimidazole ribotide (AIR) in a radical S-adenosyl-L-methionine (SAM)-dependent reaction. The sequence is that of Phosphomethylpyrimidine synthase from Geobacillus kaustophilus (strain HTA426).